A 782-amino-acid chain; its full sequence is Endonuclease MutS2 (782 aa).

336 to 343 (GPNTGGKT) contributes to the ATP binding site. Residues 707–782 (LDLRGYRYEE…GFGVTVAELK (76 aa)) form the Smr domain.

The protein belongs to the DNA mismatch repair MutS family. MutS2 subfamily. Homodimer. Binds to stalled ribosomes, contacting rRNA.

Its function is as follows. Endonuclease that is involved in the suppression of homologous recombination and thus may have a key role in the control of bacterial genetic diversity. Functionally, acts as a ribosome collision sensor, splitting the ribosome into its 2 subunits. Detects stalled/collided 70S ribosomes which it binds and splits by an ATP-hydrolysis driven conformational change. Acts upstream of the ribosome quality control system (RQC), a ribosome-associated complex that mediates the extraction of incompletely synthesized nascent chains from stalled ribosomes and their subsequent degradation. Probably generates substrates for RQC. The sequence is that of Endonuclease MutS2 from Staphylococcus epidermidis (strain ATCC 35984 / DSM 28319 / BCRC 17069 / CCUG 31568 / BM 3577 / RP62A).